A 228-amino-acid polypeptide reads, in one-letter code: Claudin-10 (228 aa).

A helical membrane pass occupies residues 1–21 (MASTASEIIAFMVSISGWVLV). Over 22–80 (SSTLPTDYWKVSTIDGTVITTATYWANLWKACVTDSTGVSNCKDFPSMLALDGYIQACR) the chain is Extracellular. The helical transmembrane segment at 81–101 (GLMIAAVSLGFFGSIFALFGM) threads the bilayer. Topologically, residues 102–115 (KCTKVGGSDKAKAK) are cytoplasmic. The helical transmembrane segment at 116 to 136 (IACLAGIVFILSGLCSMTGCS) threads the bilayer. The Extracellular segment spans residues 137–160 (LYANKITTEFFDPLFVEQKYELGA). A helical membrane pass occupies residues 161–181 (ALFIGWAGASLCIIGGVIFCF). Topologically, residues 182–228 (SISDNNKTPRYTYNGATSVMSSRTKYHGGEDFKTTNPSKQFDKNAYV) are cytoplasmic.

The protein belongs to the claudin family. In terms of assembly, can form homodimers both in trans (interaction between CLDN10 molecules in opposing membranes) and in cis (interaction between CLDN10 molecules within one membrane). As to quaternary structure, interacts with CLDN19. As to expression, expressed in the kidney, eccrine sweat glands and in all layers of the epidermis. In the kidney, it is detected in the thick ascending limb of Henle's loop (TAL). In the sweat glands, it is expressed in cells from secretory portions, corresponding to the clear cells.

The protein localises to the cell junction. It localises to the tight junction. It is found in the cell membrane. The catalysed reaction is Na(+)(in) = Na(+)(out). It catalyses the reaction Li(+)(in) = Li(+)(out). It carries out the reaction K(+)(in) = K(+)(out). The enzyme catalyses Rb(+)(in) = Rb(+)(out). The catalysed reaction is Cs(+)(in) = Cs(+)(out). It catalyses the reaction NH4(+)(in) = NH4(+)(out). It carries out the reaction methylamine(out) = methylamine(in). The enzyme catalyses Mg(2+)(in) = Mg(2+)(out). The catalysed reaction is Ca(2+)(in) = Ca(2+)(out). It catalyses the reaction Sr(2+)(in) = Sr(2+)(out). It carries out the reaction chloride(in) = chloride(out). The enzyme catalyses nitrate(in) = nitrate(out). In terms of biological role, forms paracellular channels: polymerizes in tight junction strands with cation- and anion-selective channels through the strands, conveying epithelial permeability in a process known as paracellular tight junction permeability. Its function is as follows. Forms cation-selective paracellular channels. In sweat glands and in the thick ascending limb (TAL) of Henle's loop in kidney, it controls paracellular sodium permeability which is essential for proper sweat production and renal function. Forms anion-selective paracellular channels. In renal proximal tubules, it conveys selective chloride over hydrogencarbonate anion permeability which is required for renal chloride reabsorption and salt homeostasis. This chain is Claudin-10, found in Homo sapiens (Human).